Reading from the N-terminus, the 497-residue chain is Apolipoprotein N-acyltransferase (497 aa).

6 helical membrane-spanning segments follow: residues 21 to 41 (FAPF…ALLW), 51 to 71 (ALTG…WLYV), 85 to 105 (VLAL…TGWI), 119 to 139 (GMVA…FTGF), 157 to 177 (FAPV…AAWL), and 189 to 209 (FWLG…IHWT). A CN hydrolase domain is found at 221-461 (LQGNIPQNMK…GLHSTAQGFG (241 aa)). Catalysis depends on Glu259, which acts as the Proton acceptor. Lys319 is a catalytic residue. The Nucleophile role is filled by Cys371. Residues 472–492 (SLVFALIGLLLLAGSLAAFSG) form a helical membrane-spanning segment.

This sequence belongs to the CN hydrolase family. Apolipoprotein N-acyltransferase subfamily.

It localises to the cell inner membrane. It carries out the reaction N-terminal S-1,2-diacyl-sn-glyceryl-L-cysteinyl-[lipoprotein] + a glycerophospholipid = N-acyl-S-1,2-diacyl-sn-glyceryl-L-cysteinyl-[lipoprotein] + a 2-acyl-sn-glycero-3-phospholipid + H(+). The protein operates within protein modification; lipoprotein biosynthesis (N-acyl transfer). Functionally, catalyzes the phospholipid dependent N-acylation of the N-terminal cysteine of apolipoprotein, the last step in lipoprotein maturation. The chain is Apolipoprotein N-acyltransferase from Nitrosomonas europaea (strain ATCC 19718 / CIP 103999 / KCTC 2705 / NBRC 14298).